The following is a 176-amino-acid chain: MKEVVAKKYVKALILSLSSDEFDKLGNELKDISNAFLLPKLKVIIDSPDISSKQKADFLFSLLDNASNKIHNFLLLLAERKRLGLIPEISKEFEYQQAVRDCKFSGLISGNFELSAAQKTELEERFSKKFGAKIEFENIKNNYNGIKIELDDLGVEVSFSIDRLKAQMSEYILKAI.

This sequence belongs to the ATPase delta chain family. F-type ATPases have 2 components, F(1) - the catalytic core - and F(0) - the membrane proton channel. F(1) has five subunits: alpha(3), beta(3), gamma(1), delta(1), epsilon(1). F(0) has three main subunits: a(1), b(2) and c(10-14). The alpha and beta chains form an alternating ring which encloses part of the gamma chain. F(1) is attached to F(0) by a central stalk formed by the gamma and epsilon chains, while a peripheral stalk is formed by the delta and b chains.

The protein localises to the cell inner membrane. F(1)F(0) ATP synthase produces ATP from ADP in the presence of a proton or sodium gradient. F-type ATPases consist of two structural domains, F(1) containing the extramembraneous catalytic core and F(0) containing the membrane proton channel, linked together by a central stalk and a peripheral stalk. During catalysis, ATP synthesis in the catalytic domain of F(1) is coupled via a rotary mechanism of the central stalk subunits to proton translocation. In terms of biological role, this protein is part of the stalk that links CF(0) to CF(1). It either transmits conformational changes from CF(0) to CF(1) or is implicated in proton conduction. This Campylobacter fetus subsp. fetus (strain 82-40) protein is ATP synthase subunit delta.